A 298-amino-acid polypeptide reads, in one-letter code: HTH-type transcriptional regulator ArgP (298 aa).

The region spanning 4-60 (VDYRWVAALDAVIAQRGFERAAEKLCITQSAVSQRIKQLEKLMAQPLLVREQPPRPT) is the HTH lysR-type domain. The segment at residues 21–40 (FERAAEKLCITQSAVSQRIK) is a DNA-binding region (H-T-H motif).

The protein belongs to the LysR transcriptional regulatory family. In terms of assembly, homodimer.

Its function is as follows. Controls the transcription of genes involved in arginine and lysine metabolism. This chain is HTH-type transcriptional regulator ArgP, found in Photobacterium profundum (strain SS9).